The sequence spans 162 residues: uncharacterized protein (162 aa).

This is an uncharacterized protein from Frog virus 3 (isolate Goorha) (FV-3).